The following is a 169-amino-acid chain: Probable inosine/xanthosine triphosphatase (169 aa).

7–12 (STNKAK) serves as a coordination point for substrate. E35 lines the Mg(2+) pocket.

Belongs to the YjjX NTPase family. In terms of assembly, homodimer. Requires Mg(2+) as cofactor. The cofactor is Mn(2+).

The catalysed reaction is XTP + H2O = XDP + phosphate + H(+). It carries out the reaction ITP + H2O = IDP + phosphate + H(+). Functionally, phosphatase that hydrolyzes non-canonical purine nucleotides such as XTP and ITP to their respective diphosphate derivatives. Probably excludes non-canonical purines from DNA/RNA precursor pool, thus preventing their incorporation into DNA/RNA and avoiding chromosomal lesions. The protein is Probable inosine/xanthosine triphosphatase of Sulfurisphaera tokodaii (strain DSM 16993 / JCM 10545 / NBRC 100140 / 7) (Sulfolobus tokodaii).